A 213-amino-acid chain; its full sequence is Na(+)-translocating NADH-quinone reductase subunit D (213 aa).

7 helical membrane passes run 21-41, 42-62, 77-97, 101-121, 131-151, 153-173, and 183-203; these read ILIAILGICSALAVTTTVQTA, ITMGIAVSIVTGCSSFFVSLL, IIISLFVIVIDQFLKAFFFDI, LSVFVGLIITNCIVMGRSESL, FLDGFASGLGYGWVLLVIGVI, ELFGFGTLMGFRIIPQFVYAS, and LSLMVLAPSAFFLLGIMIWLV.

This sequence belongs to the NqrDE/RnfAE family. Composed of six subunits; NqrA, NqrB, NqrC, NqrD, NqrE and NqrF.

Its subcellular location is the cell inner membrane. It catalyses the reaction a ubiquinone + n Na(+)(in) + NADH + H(+) = a ubiquinol + n Na(+)(out) + NAD(+). In terms of biological role, NQR complex catalyzes the reduction of ubiquinone-1 to ubiquinol by two successive reactions, coupled with the transport of Na(+) ions from the cytoplasm to the periplasm. NqrA to NqrE are probably involved in the second step, the conversion of ubisemiquinone to ubiquinol. The sequence is that of Na(+)-translocating NADH-quinone reductase subunit D from Chlamydia pneumoniae (Chlamydophila pneumoniae).